Here is a 311-residue protein sequence, read N- to C-terminus: Porphobilinogen deaminase (311 aa).

Residue C241 is modified to S-(dipyrrolylmethanemethyl)cysteine.

It belongs to the HMBS family. As to quaternary structure, monomer. Requires dipyrromethane as cofactor.

It catalyses the reaction 4 porphobilinogen + H2O = hydroxymethylbilane + 4 NH4(+). It functions in the pathway porphyrin-containing compound metabolism; protoporphyrin-IX biosynthesis; coproporphyrinogen-III from 5-aminolevulinate: step 2/4. Functionally, tetrapolymerization of the monopyrrole PBG into the hydroxymethylbilane pre-uroporphyrinogen in several discrete steps. This Carboxydothermus hydrogenoformans (strain ATCC BAA-161 / DSM 6008 / Z-2901) protein is Porphobilinogen deaminase.